The following is a 217-amino-acid chain: Glycine betaine/carnitine/choline transport system permease protein OpuCB (217 aa).

One can recognise an ABC transmembrane type-1 domain in the interval 19-198; the sequence is TGEHLYISLI…ILAIIIDYVL (180 aa). 6 helical membrane-spanning segments follow: residues 23 to 43, 52 to 74, 84 to 101, 128 to 148, 150 to 170, and 180 to 200; these read LYIS…LGVA, GAVI…AFFI, AIVA…RNTY, LVEI…STIY, IGWA…YIFI, and IIGG…VLAV.

It belongs to the binding-protein-dependent transport system permease family. CysTW subfamily. In terms of assembly, the complex is composed of two ATP-binding proteins (OpuCA), two transmembrane proteins (OpuCB and OpuCD) and a solute-binding protein (OpuCC).

It localises to the cell membrane. Its function is as follows. Involved in a high affinity multicomponent binding-protein-dependent transport system for glycine betaine, carnitine and choline; probably responsible for the translocation of the substrate across the membrane. In Bacillus subtilis (strain 168), this protein is Glycine betaine/carnitine/choline transport system permease protein OpuCB (opuCB).